An 88-amino-acid polypeptide reads, in one-letter code: UPF0223 protein OB1419 (88 aa).

The protein belongs to the UPF0223 family.

This chain is UPF0223 protein OB1419, found in Oceanobacillus iheyensis (strain DSM 14371 / CIP 107618 / JCM 11309 / KCTC 3954 / HTE831).